Consider the following 559-residue polypeptide: Dihydroxy-acid dehydratase (559 aa).

Residue Cys-56 coordinates [2Fe-2S] cluster. Asp-88 lines the Mg(2+) pocket. Cys-129 is a binding site for [2Fe-2S] cluster. Residues Asp-130 and Lys-131 each coordinate Mg(2+). N6-carboxylysine is present on Lys-131. Cys-198 contacts [2Fe-2S] cluster. Glu-449 serves as a coordination point for Mg(2+). The Proton acceptor role is filled by Ser-475.

It belongs to the IlvD/Edd family. Homodimer. Requires [2Fe-2S] cluster as cofactor. It depends on Mg(2+) as a cofactor.

It catalyses the reaction (2R)-2,3-dihydroxy-3-methylbutanoate = 3-methyl-2-oxobutanoate + H2O. It carries out the reaction (2R,3R)-2,3-dihydroxy-3-methylpentanoate = (S)-3-methyl-2-oxopentanoate + H2O. It participates in amino-acid biosynthesis; L-isoleucine biosynthesis; L-isoleucine from 2-oxobutanoate: step 3/4. It functions in the pathway amino-acid biosynthesis; L-valine biosynthesis; L-valine from pyruvate: step 3/4. Functionally, functions in the biosynthesis of branched-chain amino acids. Catalyzes the dehydration of (2R,3R)-2,3-dihydroxy-3-methylpentanoate (2,3-dihydroxy-3-methylvalerate) into 2-oxo-3-methylpentanoate (2-oxo-3-methylvalerate) and of (2R)-2,3-dihydroxy-3-methylbutanoate (2,3-dihydroxyisovalerate) into 2-oxo-3-methylbutanoate (2-oxoisovalerate), the penultimate precursor to L-isoleucine and L-valine, respectively. This is Dihydroxy-acid dehydratase from Ruthia magnifica subsp. Calyptogena magnifica.